The primary structure comprises 251 residues: Spermatogenesis-associated protein 46 (251 aa).

The protein resides in the nucleus membrane. In terms of biological role, plays a role in spermiogenesis and fertilization. In Macaca fascicularis (Crab-eating macaque), this protein is Spermatogenesis-associated protein 46 (SPATA46).